The primary structure comprises 101 residues: Signal recognition particle 19 kDa protein (101 aa).

The protein belongs to the SRP19 family. As to quaternary structure, part of the signal recognition particle protein translocation system, which is composed of SRP and FtsY. Archaeal SRP consists of a 7S RNA molecule of 300 nucleotides and two protein subunits: SRP54 and SRP19.

Its subcellular location is the cytoplasm. In terms of biological role, involved in targeting and insertion of nascent membrane proteins into the cytoplasmic membrane. Binds directly to 7S RNA and mediates binding of the 54 kDa subunit of the SRP. The protein is Signal recognition particle 19 kDa protein of Methanosarcina acetivorans (strain ATCC 35395 / DSM 2834 / JCM 12185 / C2A).